Here is a 419-residue protein sequence, read N- to C-terminus: Carboxypeptidase A1 (419 aa).

An N-terminal signal peptide occupies residues 1 to 16; that stretch reads MWGLLIFSVLLGGVLA. Positions 17–110 are cleaved as a propeptide — activation peptide; sequence KEDFVGHQVL…QEQMFASQGR (94 aa). The Peptidase M14 domain maps to 121–414; that stretch reads TYHTLEEIYD…LALLTIMEHT (294 aa). Zn(2+)-binding residues include histidine 179 and glutamate 182. Substrate is bound by residues 179-182, arginine 237, and 254-255; these read HSRE and NR. Cysteine 248 and cysteine 271 are joined by a disulfide. Histidine 306 serves as a coordination point for Zn(2+). Substrate is bound by residues 307-308 and tyrosine 358; that span reads SY. Glutamate 380 (proton donor/acceptor) is an active-site residue.

It belongs to the peptidase M14 family. Monomer. May form a complex with proelastase 2. The cofactor is Zn(2+).

It localises to the secreted. It catalyses the reaction Release of a C-terminal amino acid, but little or no action with -Asp, -Glu, -Arg, -Lys or -Pro.. The catalysed reaction is leukotriene C4 + H2O = leukotriene F4 + glycine. Its function is as follows. Carboxypeptidase that catalyzes the release of a C-terminal amino acid, but has little or no action with -Asp, -Glu, -Arg, -Lys or -Pro. Catalyzes the conversion of leukotriene C4 to leukotriene F4 via the hydrolysis of an amide bond. The protein is Carboxypeptidase A1 (CPA1) of Sus scrofa (Pig).